Reading from the N-terminus, the 112-residue chain is Phosphoribosyl-AMP cyclohydrolase (112 aa).

Mg(2+) is bound at residue Asp-76. Zn(2+) is bound at residue Cys-77. Residues Asp-78 and Asp-80 each coordinate Mg(2+). Zn(2+) contacts are provided by Cys-93 and Cys-100.

This sequence belongs to the PRA-CH family. Homodimer. It depends on Mg(2+) as a cofactor. Requires Zn(2+) as cofactor.

It is found in the cytoplasm. It carries out the reaction 1-(5-phospho-beta-D-ribosyl)-5'-AMP + H2O = 1-(5-phospho-beta-D-ribosyl)-5-[(5-phospho-beta-D-ribosylamino)methylideneamino]imidazole-4-carboxamide. It functions in the pathway amino-acid biosynthesis; L-histidine biosynthesis; L-histidine from 5-phospho-alpha-D-ribose 1-diphosphate: step 3/9. Functionally, catalyzes the hydrolysis of the adenine ring of phosphoribosyl-AMP. This chain is Phosphoribosyl-AMP cyclohydrolase, found in Streptococcus thermophilus (strain ATCC BAA-491 / LMD-9).